The sequence spans 93 residues: UPF0358 protein OB1428 (93 aa).

Belongs to the UPF0358 family.

This is UPF0358 protein OB1428 from Oceanobacillus iheyensis (strain DSM 14371 / CIP 107618 / JCM 11309 / KCTC 3954 / HTE831).